The primary structure comprises 23 residues: Apolipophorin-1 (23 aa).

Residues 1 to 15 (SVKSEVDNFDKHLKA) show a composition bias toward basic and acidic residues. Positions 1–23 (SVKSEVDNFDKHLKAESAPFNNE) are disordered.

As to expression, expressed in hemolymph.

It is found in the secreted. In terms of biological role, constitutes the major component of lipophorin, which mediates transport for various types of lipids in hemolymph. Acts by forming lipoprotein particles that bind lipoproteins and lipids. This Galleria mellonella (Greater wax moth) protein is Apolipophorin-1.